The sequence spans 119 residues: Ribonuclease P protein component (119 aa).

Belongs to the RnpA family. In terms of assembly, consists of a catalytic RNA component (M1 or rnpB) and a protein subunit.

The catalysed reaction is Endonucleolytic cleavage of RNA, removing 5'-extranucleotides from tRNA precursor.. Its function is as follows. RNaseP catalyzes the removal of the 5'-leader sequence from pre-tRNA to produce the mature 5'-terminus. It can also cleave other RNA substrates such as 4.5S RNA. The protein component plays an auxiliary but essential role in vivo by binding to the 5'-leader sequence and broadening the substrate specificity of the ribozyme. This chain is Ribonuclease P protein component, found in Yersinia enterocolitica serotype O:8 / biotype 1B (strain NCTC 13174 / 8081).